A 510-amino-acid chain; its full sequence is D-alanine--D-alanyl carrier protein ligase (510 aa).

157–158 (TS) serves as a coordination point for ATP. Asp202 is a D-alanine binding site. 297–302 (NTYGPT) is an ATP binding site. Val306 lines the D-alanine pocket. Asp389 and Lys498 together coordinate ATP. Lys498 provides a ligand contact to D-alanine.

It belongs to the ATP-dependent AMP-binding enzyme family. DltA subfamily.

It localises to the cytoplasm. It catalyses the reaction holo-[D-alanyl-carrier protein] + D-alanine + ATP = D-alanyl-[D-alanyl-carrier protein] + AMP + diphosphate. It participates in cell wall biogenesis; lipoteichoic acid biosynthesis. Functionally, catalyzes the first step in the D-alanylation of lipoteichoic acid (LTA), the activation of D-alanine and its transfer onto the D-alanyl carrier protein (Dcp) DltC. In an ATP-dependent two-step reaction, forms a high energy D-alanyl-AMP intermediate, followed by transfer of the D-alanyl residue as a thiol ester to the phosphopantheinyl prosthetic group of the Dcp. D-alanylation of LTA plays an important role in modulating the properties of the cell wall in Gram-positive bacteria, influencing the net charge of the cell wall. This Listeria welshimeri serovar 6b (strain ATCC 35897 / DSM 20650 / CCUG 15529 / CIP 8149 / NCTC 11857 / SLCC 5334 / V8) protein is D-alanine--D-alanyl carrier protein ligase.